The primary structure comprises 156 residues: Arginine repressor (156 aa).

Belongs to the ArgR family.

Its subcellular location is the cytoplasm. It participates in amino-acid biosynthesis; L-arginine biosynthesis [regulation]. In terms of biological role, regulates arginine biosynthesis genes. The protein is Arginine repressor of Shewanella frigidimarina (strain NCIMB 400).